Here is a 274-residue protein sequence, read N- to C-terminus: 3-methyl-2-oxobutanoate hydroxymethyltransferase (274 aa).

Mg(2+)-binding residues include Asp-49 and Asp-88. Residues 49–50, Asp-88, and Lys-118 each bind 3-methyl-2-oxobutanoate; that span reads DS. Glu-120 lines the Mg(2+) pocket. Glu-187 (proton acceptor) is an active-site residue.

It belongs to the PanB family. Homodecamer; pentamer of dimers. The cofactor is Mg(2+).

The protein localises to the cytoplasm. It carries out the reaction 3-methyl-2-oxobutanoate + (6R)-5,10-methylene-5,6,7,8-tetrahydrofolate + H2O = 2-dehydropantoate + (6S)-5,6,7,8-tetrahydrofolate. Its pathway is cofactor biosynthesis; (R)-pantothenate biosynthesis; (R)-pantoate from 3-methyl-2-oxobutanoate: step 1/2. Its function is as follows. Catalyzes the reversible reaction in which hydroxymethyl group from 5,10-methylenetetrahydrofolate is transferred onto alpha-ketoisovalerate to form ketopantoate. The polypeptide is 3-methyl-2-oxobutanoate hydroxymethyltransferase (Rhodopseudomonas palustris (strain ATCC BAA-98 / CGA009)).